We begin with the raw amino-acid sequence, 468 residues long: N-acyl-phosphatidylethanolamine-hydrolyzing phospholipase D, mitochondrial (468 aa).

The N-terminal 39 residues, 1–39 (MNFVTCHVQMRLLLQRRLVRLRESELFRPQTSLSTFKRH), are a transit peptide targeting the mitochondrion. A helical transmembrane segment spans residues 54 to 76 (YARILLLSVLVPYTGYAFYVSLA). 6 residues coordinate Zn(2+): histidine 265, histidine 267, aspartate 269, histidine 270, histidine 332, and histidine 425.

The protein belongs to the NAPE-PLD family. Requires Zn(2+) as cofactor.

Its subcellular location is the mitochondrion membrane. The enzyme catalyses an N-acyl-1,2-diacyl-sn-glycero-3-phosphoethanolamine + H2O = an N-acylethanolamine + a 1,2-diacyl-sn-glycero-3-phosphate + H(+). Functionally, hydrolyzes N-acyl-phosphatidylethanolamines (NAPEs) to produce N-acylethanolamines (NAEs). The sequence is that of N-acyl-phosphatidylethanolamine-hydrolyzing phospholipase D, mitochondrial (FMP30) from Saccharomyces cerevisiae (strain ATCC 204508 / S288c) (Baker's yeast).